Reading from the N-terminus, the 241-residue chain is Leucyl/phenylalanyl-tRNA--protein transferase (241 aa).

Belongs to the L/F-transferase family.

The protein localises to the cytoplasm. It catalyses the reaction N-terminal L-lysyl-[protein] + L-leucyl-tRNA(Leu) = N-terminal L-leucyl-L-lysyl-[protein] + tRNA(Leu) + H(+). The catalysed reaction is N-terminal L-arginyl-[protein] + L-leucyl-tRNA(Leu) = N-terminal L-leucyl-L-arginyl-[protein] + tRNA(Leu) + H(+). The enzyme catalyses L-phenylalanyl-tRNA(Phe) + an N-terminal L-alpha-aminoacyl-[protein] = an N-terminal L-phenylalanyl-L-alpha-aminoacyl-[protein] + tRNA(Phe). Functionally, functions in the N-end rule pathway of protein degradation where it conjugates Leu, Phe and, less efficiently, Met from aminoacyl-tRNAs to the N-termini of proteins containing an N-terminal arginine or lysine. This is Leucyl/phenylalanyl-tRNA--protein transferase from Colwellia psychrerythraea (strain 34H / ATCC BAA-681) (Vibrio psychroerythus).